We begin with the raw amino-acid sequence, 109 residues long: Oncomodulin (109 aa).

Ser2 is subject to N-acetylserine. 2 consecutive EF-hand domains span residues 39–74 (MSAS…FESG) and 78–109 (LTES…MVHS). Ca(2+) is bound by residues Asp52, Asp54, Ser56, Tyr58, Glu63, Asp91, Asp93, Asp95, Lys97, and Glu102.

Belongs to the parvalbumin family. As to expression, abundant in the organ of Corti.

In terms of biological role, has some calmodulin-like activity with respect to enzyme activation and growth regulation. Binds two calcium ions. The sequence is that of Oncomodulin (OCM) from Cavia porcellus (Guinea pig).